A 302-amino-acid polypeptide reads, in one-letter code: Spermidine synthase (302 aa).

Met1 bears the N-acetylmethionine mark. The PABS domain occupies 18–253; it reads EGWFRETCSL…GQIGFMLCSK (236 aa). Gln49 contributes to the S-adenosyl 3-(methylsulfanyl)propylamine binding site. Tyr79 provides a ligand contact to putrescine. Residues Gln80, Asp104, Glu124, 155-156, and Asp173 contribute to the S-adenosyl 3-(methylsulfanyl)propylamine site; that span reads DG. Residue Asp173 is the Proton acceptor of the active site. Putrescine is bound by residues 173–176 and Tyr241; that span reads DSSD.

This sequence belongs to the spermidine/spermine synthase family. Homodimer or homotetramer.

It catalyses the reaction S-adenosyl 3-(methylsulfanyl)propylamine + putrescine = S-methyl-5'-thioadenosine + spermidine + H(+). It participates in amine and polyamine biosynthesis; spermidine biosynthesis; spermidine from putrescine: step 1/1. With respect to regulation, the activity is thought to be regulated mainly by the availability of decarboxylated S-adenosylmethionine. Functionally, catalyzes the production of spermidine from putrescine and decarboxylated S-adenosylmethionine (dcSAM). Has a strong preference for putrescine as substrate, and has very low activity towards 1,3-diaminopropane. Has extremely low activity towards spermidine. This chain is Spermidine synthase (SRM), found in Homo sapiens (Human).